Here is a 156-residue protein sequence, read N- to C-terminus: Arginine repressor (156 aa).

Belongs to the ArgR family.

The protein localises to the cytoplasm. It participates in amino-acid biosynthesis; L-arginine biosynthesis [regulation]. Regulates arginine biosynthesis genes. This is Arginine repressor from Cronobacter sakazakii (strain ATCC BAA-894) (Enterobacter sakazakii).